The sequence spans 553 residues: MKTDIEIAQECKLERIEKIAEKLNLTDDDYEVYGKYKAKIELSLLNKLKDKKDGKLVLVTAITPTPAGEGKSTVTIGLTQGLNKIGKNAVAALREPSLGPVFGIKGGACGGGYSQIVPMEDINLHFNGDFHAISSAHNLISACIDNHIKQGNELKIDINKIVFKRVLDMNDRALRDIVIGLGGSENGVVRQSSFQITVSSEIMAILCLSNSLMDLKEKIGNVIFAYDINDNPLRVKDLKIEGAACTLLKDAIKPNLVQTLENTPVIVHGGPFANIAHGCNSILATKMALKLSDYTITEAGFAADLGAEKFLDIKCRLAGLKPNCIVLVATIRALKHHGGASDINKEDIEALTKGFENLDKHIENMQKYNVPVVVAINKFVSDTDKEIECITKHCESKGIDISLCEVWAKGGEGAIELSHKVLKAASEESNYKPLYELEKSIKEKIETICKEIYSAGEVKFSNKALKMMKKIENMGFGNLPICISKTQKSISDNPALLNAPKGYTLNIDEIKLASGAGFIIAMAGGIIDMPGLPKIPVACNIDIDENGKIKGLF.

ATP is bound at residue 65–72 (TPAGEGKS).

Belongs to the formate--tetrahydrofolate ligase family.

The catalysed reaction is (6S)-5,6,7,8-tetrahydrofolate + formate + ATP = (6R)-10-formyltetrahydrofolate + ADP + phosphate. The protein operates within one-carbon metabolism; tetrahydrofolate interconversion. This Brachyspira hyodysenteriae (strain ATCC 49526 / WA1) protein is Formate--tetrahydrofolate ligase.